The following is an 84-amino-acid chain: Defensin-like protein 140 (84 aa).

Residues M1 to G28 form the signal peptide. Cystine bridges form between C37-C81, C46-C65, C51-C75, and C55-C77.

The protein belongs to the DEFL family.

The protein localises to the secreted. The chain is Defensin-like protein 140 (LCR15) from Arabidopsis thaliana (Mouse-ear cress).